The chain runs to 162 residues: Putative pre-16S rRNA nuclease (162 aa).

Belongs to the YqgF nuclease family.

It is found in the cytoplasm. Could be a nuclease involved in processing of the 5'-end of pre-16S rRNA. The chain is Putative pre-16S rRNA nuclease from Brucella melitensis biotype 2 (strain ATCC 23457).